A 74-amino-acid polypeptide reads, in one-letter code: Anaphase-promoting complex subunit 13 (74 aa).

This sequence belongs to the APC13 family. The APC/C is composed of at least 12 subunits.

It localises to the nucleus. It functions in the pathway protein modification; protein ubiquitination. Functionally, component of the anaphase promoting complex/cyclosome (APC/C), a cell cycle-regulated E3 ubiquitin ligase that controls progression through mitosis and the G1 phase of the cell cycle. The APC/C complex acts by mediating ubiquitination and subsequent degradation of target proteins: it mainly mediates the formation of 'Lys-11'-linked polyubiquitin chains and, to a lower extent, the formation of 'Lys-48'- and 'Lys-63'-linked polyubiquitin chains. The APC/C complex catalyzes assembly of branched 'Lys-11'-/'Lys-48'-linked branched ubiquitin chains on target proteins. This is Anaphase-promoting complex subunit 13 (anapc13) from Xenopus tropicalis (Western clawed frog).